A 456-amino-acid polypeptide reads, in one-letter code: Adenylyltransferase and sulfurtransferase uba4 (456 aa).

Residues glycine 101, aspartate 122, 129-133, lysine 146, and 161-162 contribute to the ATP site; these read SNLHR and DH. Zn(2+) contacts are provided by cysteine 210 and cysteine 213. The active-site Glycyl thioester intermediate; for adenylyltransferase activity is the cysteine 227. The Zn(2+) site is built by cysteine 300 and cysteine 303. Residues 350-454 form the Rhodanese domain; the sequence is KEKEHLLIDV…WKEQVDGSWP (105 aa). Cysteine 409 serves as the catalytic Cysteine persulfide intermediate; for sulfurtransferase activity.

This sequence in the N-terminal section; belongs to the HesA/MoeB/ThiF family. UBA4 subfamily. Zn(2+) is required as a cofactor.

The protein resides in the cytoplasm. It localises to the cytosol. The catalysed reaction is [molybdopterin-synthase sulfur-carrier protein]-C-terminal Gly-Gly + ATP + H(+) = [molybdopterin-synthase sulfur-carrier protein]-C-terminal Gly-Gly-AMP + diphosphate. The enzyme catalyses [molybdopterin-synthase sulfur-carrier protein]-C-terminal Gly-Gly-AMP + S-sulfanyl-L-cysteinyl-[cysteine desulfurase] + AH2 = [molybdopterin-synthase sulfur-carrier protein]-C-terminal-Gly-aminoethanethioate + L-cysteinyl-[cysteine desulfurase] + A + AMP + 2 H(+). Its pathway is tRNA modification; 5-methoxycarbonylmethyl-2-thiouridine-tRNA biosynthesis. In terms of biological role, plays a central role in 2-thiolation of mcm(5)S(2)U at tRNA wobble positions of cytosolic tRNA(Lys), tRNA(Glu) and tRNA(Gln). Also essential during biosynthesis of the molybdenum cofactor. Acts by mediating the C-terminal thiocarboxylation of sulfur carriers urm1 and mocs2a. Its N-terminus first activates urm1 and mocs2a as acyl-adenylates (-COAMP), then the persulfide sulfur on the catalytic cysteine is transferred to urm1 and mocs2a to form thiocarboxylation (-COSH) of their C-terminus. The reaction probably involves hydrogen sulfide that is generated from the persulfide intermediate and that acts as a nucleophile towards urm1 and mocs2a. Subsequently, a transient disulfide bond is formed. Does not use thiosulfate as sulfur donor; nfs1 probably acting as a sulfur donor for thiocarboxylation reactions. The polypeptide is Adenylyltransferase and sulfurtransferase uba4 (Sclerotinia sclerotiorum (strain ATCC 18683 / 1980 / Ss-1) (White mold)).